Reading from the N-terminus, the 336-residue chain is MKERIVNLETLDFETSQEASLRPNLWEDYIGQEKIKSNLQVSICAAKKRQESLDHMLFFGPPGLGKTSISHIIAKEMETNLKITAAPMIEKSGDLAAILTNLQAKDILFIDEIHRLSPAIEEVLYPAMEDFRLDIIIGSGPAAQTIKIDLPPFTLIGATTRAGMLSNPLRDRFGMSFRMQFYSPSELALIIKKAAAKLNQDIKEESADEIAKRSRGTPRIALRLLKRVRDFALVKNSSLMDLNITLHALNELGVNELGFDEADLAYLSLLANAQGRPVGLNTIAASMREDEGTIEDVIEPFLLANGYLERTAKGRIATPKTHALLKIPTLNPQTLF.

The large ATPase domain (RuvB-L) stretch occupies residues 1 to 182 (MKERIVNLET…FGMSFRMQFY (182 aa)). ATP-binding positions include leucine 21, arginine 22, glycine 63, lysine 66, threonine 67, serine 68, 129–131 (EDF), arginine 172, tyrosine 182, and arginine 219. Threonine 67 provides a ligand contact to Mg(2+). The segment at 183-253 (SPSELALIIK…ITLHALNELG (71 aa)) is small ATPAse domain (RuvB-S). The segment at 256–336 (ELGFDEADLA…IPTLNPQTLF (81 aa)) is head domain (RuvB-H). Positions 310 and 315 each coordinate DNA.

This sequence belongs to the RuvB family. Homohexamer. Forms an RuvA(8)-RuvB(12)-Holliday junction (HJ) complex. HJ DNA is sandwiched between 2 RuvA tetramers; dsDNA enters through RuvA and exits via RuvB. An RuvB hexamer assembles on each DNA strand where it exits the tetramer. Each RuvB hexamer is contacted by two RuvA subunits (via domain III) on 2 adjacent RuvB subunits; this complex drives branch migration. In the full resolvosome a probable DNA-RuvA(4)-RuvB(12)-RuvC(2) complex forms which resolves the HJ.

The protein localises to the cytoplasm. It carries out the reaction ATP + H2O = ADP + phosphate + H(+). In terms of biological role, the RuvA-RuvB-RuvC complex processes Holliday junction (HJ) DNA during genetic recombination and DNA repair, while the RuvA-RuvB complex plays an important role in the rescue of blocked DNA replication forks via replication fork reversal (RFR). RuvA specifically binds to HJ cruciform DNA, conferring on it an open structure. The RuvB hexamer acts as an ATP-dependent pump, pulling dsDNA into and through the RuvAB complex. RuvB forms 2 homohexamers on either side of HJ DNA bound by 1 or 2 RuvA tetramers; 4 subunits per hexamer contact DNA at a time. Coordinated motions by a converter formed by DNA-disengaged RuvB subunits stimulates ATP hydrolysis and nucleotide exchange. Immobilization of the converter enables RuvB to convert the ATP-contained energy into a lever motion, pulling 2 nucleotides of DNA out of the RuvA tetramer per ATP hydrolyzed, thus driving DNA branch migration. The RuvB motors rotate together with the DNA substrate, which together with the progressing nucleotide cycle form the mechanistic basis for DNA recombination by continuous HJ branch migration. Branch migration allows RuvC to scan DNA until it finds its consensus sequence, where it cleaves and resolves cruciform DNA. The sequence is that of Holliday junction branch migration complex subunit RuvB from Helicobacter pylori (strain Shi470).